The sequence spans 222 residues: MSADPTLIPASPSEDDYVRQVREATPPPLLSEEDPFALFAEWLEEAGKKEPNDPNAMTVSTVDADGMPDSRMVLLKDFDARGFVFYTNTQSAKGQELNAHPKAALLFHWKSLRRQVRIRGTVEPVTEAEADAYFASRARHSQIGAWASDQSQPLPDRHALEKRVAEMGLKFGLGKVPRPPHWSGYRITPVTIEFWRDRPFRLHERLVFDRADGGWTTKRLFP.

FMN-binding positions include 71–76, 86–87, lysine 93, and glutamine 115; these read RMVLLK and YT. Substrate is bound at residue lysine 76. Residues tyrosine 133, arginine 137, and serine 141 each coordinate substrate. FMN contacts are provided by residues 150 to 151 and tryptophan 195; that span reads QS. 201–203 lines the substrate pocket; sequence RLH. Arginine 205 serves as a coordination point for FMN.

The protein belongs to the pyridoxamine 5'-phosphate oxidase family. In terms of assembly, homodimer. FMN serves as cofactor.

The catalysed reaction is pyridoxamine 5'-phosphate + O2 + H2O = pyridoxal 5'-phosphate + H2O2 + NH4(+). It carries out the reaction pyridoxine 5'-phosphate + O2 = pyridoxal 5'-phosphate + H2O2. Its pathway is cofactor metabolism; pyridoxal 5'-phosphate salvage; pyridoxal 5'-phosphate from pyridoxamine 5'-phosphate: step 1/1. It functions in the pathway cofactor metabolism; pyridoxal 5'-phosphate salvage; pyridoxal 5'-phosphate from pyridoxine 5'-phosphate: step 1/1. Its function is as follows. Catalyzes the oxidation of either pyridoxine 5'-phosphate (PNP) or pyridoxamine 5'-phosphate (PMP) into pyridoxal 5'-phosphate (PLP). The chain is Pyridoxine/pyridoxamine 5'-phosphate oxidase from Caulobacter vibrioides (strain ATCC 19089 / CIP 103742 / CB 15) (Caulobacter crescentus).